Consider the following 1025-residue polypeptide: Multidrug resistance protein MdtC (1025 aa).

12 helical membrane passes run 3 to 23 (FFALFIYRPVATILLSVAITL), 333 to 353 (EVEQTLIISVALVILVVFLFL), 360 to 380 (IIPAVAVPVSLIGTFAAMYLC), 387 to 407 (LSLMALTIATGFVVDDAIVVL), 431 to 451 (VGFTVLSMSLSLVAVFLPLLL), 463 to 483 (FAVTLSVAIVISLLVSLTLTP), 528 to 548 (LVGVVLLGTIALNIWLYISIP), 853 to 873 (VILIIAAIATVYIVLGILYES), 875 to 895 (VHPLTILSTLPSAGVGALLAL), 897 to 917 (LFNAPFSLIALIGIMLLIGIV), 953 to 973 (PIMMTTLAALFGALPLVLSGG), and 984 to 1004 (ITIVGGLVMSQLLTLYTTPVV).

The protein belongs to the resistance-nodulation-cell division (RND) (TC 2.A.6) family. MdtC subfamily. In terms of assembly, part of a tripartite efflux system composed of MdtA, MdtB and MdtC. MdtC forms a heteromultimer with MdtB.

The protein resides in the cell inner membrane. In terms of biological role, the MdtABC tripartite complex confers resistance against novobiocin and deoxycholate. The sequence is that of Multidrug resistance protein MdtC from Escherichia coli O139:H28 (strain E24377A / ETEC).